A 320-amino-acid chain; its full sequence is Probable serine proteinase inhibitor 1 (320 aa).

The protein belongs to the serpin family. Poxviruses subfamily.

The chain is Probable serine proteinase inhibitor 1 (SPI-1) from Swinepox virus (strain Kasza) (SWPV).